Here is a 242-residue protein sequence, read N- to C-terminus: ATP synthase subunit 4, mitochondrial (242 aa).

Residues 1–35 (MSFRALTMRSAVARTALNNTIRSARVATPYLGIRH) constitute a mitochondrion transit peptide.

Belongs to the eukaryotic ATPase B chain family. In terms of assembly, F-type ATPases have 2 components, CF(1) - the catalytic core - and CF(0) - the membrane proton channel. In yeast, the dimeric form of ATP synthase consists of 17 polypeptides: alpha, beta, gamma, delta, epsilon, 4 (B), 5 (OSCP), 6 (A), 8, 9 (C), d, E (Tim11), f, g, h, i/j and k.

It is found in the mitochondrion. Its subcellular location is the mitochondrion inner membrane. Functionally, mitochondrial membrane ATP synthase (F(1)F(0) ATP synthase or Complex V) produces ATP from ADP in the presence of a proton gradient across the membrane which is generated by electron transport complexes of the respiratory chain. F-type ATPases consist of two structural domains, F(1) - containing the extramembraneous catalytic core, and F(0) - containing the membrane proton channel, linked together by a central stalk and a peripheral stalk. During catalysis, ATP synthesis in the catalytic domain of F(1) is coupled via a rotary mechanism of the central stalk subunits to proton translocation. Part of the complex F(0) domain and the peripheric stalk, which acts as a stator to hold the catalytic alpha(3)beta(3) subcomplex and subunit a/ATP6 static relative to the rotary elements. This chain is ATP synthase subunit 4, mitochondrial (ATP4), found in Candida glabrata (strain ATCC 2001 / BCRC 20586 / JCM 3761 / NBRC 0622 / NRRL Y-65 / CBS 138) (Yeast).